A 578-amino-acid polypeptide reads, in one-letter code: Asparagine synthetase [glutamine-hydrolyzing] 3 (578 aa).

Cys2 functions as the For GATase activity in the catalytic mechanism. The Glutamine amidotransferase type-2 domain maps to 2 to 185 (CGILAVLGCV…PGHIYSSKQG (184 aa)). Residues 50 to 54 (RLAIV), 75 to 77 (NGE), and Asp98 each bind L-glutamine. An Asparagine synthetase domain is found at 210–450 (VRNTFEKAVI…LPKHILYRQK (241 aa)). Residues Leu231, Ile267, and 341-342 (SG) each bind ATP. The segment covering 555-572 (GEDKTEDSRPEKLQKLAE) has biased composition (basic and acidic residues). A disordered region spans residues 555 to 578 (GEDKTEDSRPEKLQKLAEKTPAIV).

The catalysed reaction is L-aspartate + L-glutamine + ATP + H2O = L-asparagine + L-glutamate + AMP + diphosphate + H(+). The protein operates within amino-acid biosynthesis; L-asparagine biosynthesis. Its function is as follows. Essential for nitrogen assimilation, distribution and remobilization within the plant via the phloem. This chain is Asparagine synthetase [glutamine-hydrolyzing] 3 (ASN3), found in Arabidopsis thaliana (Mouse-ear cress).